Here is a 615-residue protein sequence, read N- to C-terminus: Protein translocase subunit SecD (615 aa).

6 helical membrane passes run 10–30, 452–472, 477–497, 504–524, 548–570, and 585–605; these read YVMLIVVIVIGLLYALPNLFG, QGLEACLAGLLVSILFMIIFY, LIATSALIANLILIVGIMSLL, MPGIAGIVLTLAVAVDANVLI, GAFSSIFDANITTLIKVIILYAV, and GVATSMFTAIVGTRAIVNLLY.

It belongs to the SecD/SecF family. SecD subfamily. Forms a complex with SecF. Part of the essential Sec protein translocation apparatus which comprises SecA, SecYEG and auxiliary proteins SecDF-YajC and YidC.

Its subcellular location is the cell inner membrane. Functionally, part of the Sec protein translocase complex. Interacts with the SecYEG preprotein conducting channel. SecDF uses the proton motive force (PMF) to complete protein translocation after the ATP-dependent function of SecA. This is Protein translocase subunit SecD from Shigella flexneri.